A 198-amino-acid polypeptide reads, in one-letter code: Small ribosomal subunit protein uS4 (198 aa).

Positions 91–151 (SRLDNIVYRL…EKSKNLKIVE (61 aa)) constitute an S4 RNA-binding domain.

The protein belongs to the universal ribosomal protein uS4 family. In terms of assembly, part of the 30S ribosomal subunit. Contacts protein S5. The interaction surface between S4 and S5 is involved in control of translational fidelity.

In terms of biological role, one of the primary rRNA binding proteins, it binds directly to 16S rRNA where it nucleates assembly of the body of the 30S subunit. Its function is as follows. With S5 and S12 plays an important role in translational accuracy. The chain is Small ribosomal subunit protein uS4 from Phytoplasma australiense.